The primary structure comprises 313 residues: uncharacterized protein (313 aa).

This is an uncharacterized protein from Treponema pallidum (strain Nichols).